Consider the following 501-residue polypeptide: Glutamyl-tRNA(Gln) amidotransferase subunit A (501 aa).

Active-site charge relay system residues include Lys-84 and Ser-159. Residue Ser-183 is the Acyl-ester intermediate of the active site.

The protein belongs to the amidase family. GatA subfamily. As to quaternary structure, heterotrimer of A, B and C subunits.

It catalyses the reaction L-glutamyl-tRNA(Gln) + L-glutamine + ATP + H2O = L-glutaminyl-tRNA(Gln) + L-glutamate + ADP + phosphate + H(+). Allows the formation of correctly charged Gln-tRNA(Gln) through the transamidation of misacylated Glu-tRNA(Gln) in organisms which lack glutaminyl-tRNA synthetase. The reaction takes place in the presence of glutamine and ATP through an activated gamma-phospho-Glu-tRNA(Gln). This chain is Glutamyl-tRNA(Gln) amidotransferase subunit A, found in Streptomyces avermitilis (strain ATCC 31267 / DSM 46492 / JCM 5070 / NBRC 14893 / NCIMB 12804 / NRRL 8165 / MA-4680).